A 516-amino-acid chain; its full sequence is GMP synthase [glutamine-hydrolyzing] (516 aa).

One can recognise a Glutamine amidotransferase type-1 domain in the interval 8–198; sequence KILILDFGSQ…VVNICGCDTL (191 aa). The active-site Nucleophile is cysteine 84. Residues histidine 172 and glutamate 174 contribute to the active site. A GMPS ATP-PPase domain is found at 199–391; the sequence is WNIENIIEND…LGLPYNMLYR (193 aa). Position 226 to 232 (226 to 232) interacts with ATP; sequence SGGVDSS.

Homodimer.

It carries out the reaction XMP + L-glutamine + ATP + H2O = GMP + L-glutamate + AMP + diphosphate + 2 H(+). It participates in purine metabolism; GMP biosynthesis; GMP from XMP (L-Gln route): step 1/1. Functionally, catalyzes the synthesis of GMP from XMP. The sequence is that of GMP synthase [glutamine-hydrolyzing] from Francisella tularensis subsp. holarctica (strain FTNF002-00 / FTA).